We begin with the raw amino-acid sequence, 341 residues long: Brain-specific homeobox/POU domain protein 3 (341 aa).

The short motif at 55–65 is the POU-IV box element; sequence RGAEALAAVDI. The POU-specific domain occupies 182–259; it reads ETETDPRELE…ILEAWLEEAE (78 aa). A DNA-binding region (homeobox) is located at residues 277–336; it reads KKRKRTSIAAPEKRSLEAYFAVQPRPSSEKIAAIAEKLDLKKNVVRVWFCNQRQKQKRMK.

It belongs to the POU transcription factor family. Class-4 subfamily.

The protein localises to the nucleus. In terms of biological role, may play a role in specifying terminally differentiated neuronal phenotypes. The polypeptide is Brain-specific homeobox/POU domain protein 3 (BRN3) (Gallus gallus (Chicken)).